Reading from the N-terminus, the 341-residue chain is Large ribosomal subunit protein uL29m (341 aa).

Residues 44–74 are disordered; sequence LARTRYTKPKPKPPRRSKVRAPTQTTHHDTD. Over residues 48–62 the composition is skewed to basic residues; it reads RYTKPKPKPPRRSKV.

It belongs to the universal ribosomal protein uL29 family. In terms of assembly, component of the mitochondrial large ribosomal subunit. Mature mitochondrial ribosomes consist of a small (37S) and a large (54S) subunit. The 37S subunit contains at least 33 different proteins and 1 molecule of RNA (15S). The 54S subunit contains at least 45 different proteins and 1 molecule of RNA (21S).

It localises to the mitochondrion. The sequence is that of Large ribosomal subunit protein uL29m (MRPL4) from Eremothecium gossypii (strain ATCC 10895 / CBS 109.51 / FGSC 9923 / NRRL Y-1056) (Yeast).